The sequence spans 129 residues: Fluoride-specific ion channel FluC (129 aa).

4 helical membrane passes run 8 to 28, 36 to 56, 71 to 91, and 103 to 123; these read FFCV…MVLA, AFPF…GLLL, FLGV…VEVV, and ALHI…AMML. Positions 78 and 81 each coordinate Na(+).

It belongs to the fluoride channel Fluc/FEX (TC 1.A.43) family.

Its subcellular location is the cell inner membrane. It catalyses the reaction fluoride(in) = fluoride(out). With respect to regulation, na(+) is not transported, but it plays an essential structural role and its presence is essential for fluoride channel function. Functionally, fluoride-specific ion channel. Important for reducing fluoride concentration in the cell, thus reducing its toxicity. The polypeptide is Fluoride-specific ion channel FluC (Idiomarina loihiensis (strain ATCC BAA-735 / DSM 15497 / L2-TR)).